The primary structure comprises 469 residues: MLCLCLYVPLIGEAQTEFQYFESKGLPAELKSIFKLSVFIPSQEFSTYRQWKQKIVQAGDKDLDGQLDFEEFVHYLQDHEKKLRLVFKSLDKKNDGRIDAQEIMQSLRDLGVKISEQQAEKILKSMDKNGTMTIDWNEWRDYHLLHPVENIPEIILYWKHSTIFDVGENLTVPDEFTVEERQTGMWWRHLVAGGGAGAVSRTCTAPLDRLKVLMQVHASRSNNMCIVGGFTQMIREGGARSLWRGNGINVLKIAPESAIKFMAYEQIKRLIGSDQETLRIHERLVAGSLAGAIAQSSIYPMEVLKTRMALRKTGQYSGMLDCARKILAREGMAAFYKGYVPNMLGIIPYAGIDLAVYETLKNAWLQRYAVNSADPGVFVLLACGTMSSTCGQLASYPLALVRTRMQAQASMEGAPEVTMSSLFKQILRTEGAFGLYRGLAPNFMKVIPAVSISYVVYENLKITLGVQSR.

At 1–189 the chain is on the mitochondrial intermembrane side; the sequence is MLCLCLYVPL…ERQTGMWWRH (189 aa). EF-hand domains lie at 47–80, 78–113, and 114–149; these read TYRQ…QDHE, DHEK…LGVK, and ISEQ…HPVE. Residues Asp-60, Asp-62, Asp-64, Gln-66, and Glu-71 each contribute to the Ca(2+) site. Solcar repeat units lie at residues 184–270, 278–363, and 375–463; these read GMWW…IKRL, LRIH…LKNA, and PGVF…LKIT. The chain crosses the membrane as a helical span at residues 190-207; that stretch reads LVAGGGAGAVSRTCTAPL. The Mitochondrial matrix segment spans residues 208 to 244; it reads DRLKVLMQVHASRSNNMCIVGGFTQMIREGGARSLWR. The helical transmembrane segment at 245 to 264 threads the bilayer; it reads GNGINVLKIAPESAIKFMAY. The Mitochondrial intermembrane portion of the chain corresponds to 265–287; the sequence is EQIKRLIGSDQETLRIHERLVAG. The helical transmembrane segment at 288 to 301 threads the bilayer; sequence SLAGAIAQSSIYPM. Topologically, residues 302-337 are mitochondrial matrix; it reads EVLKTRMALRKTGQYSGMLDCARKILAREGMAAFYK. A helical transmembrane segment spans residues 338 to 357; that stretch reads GYVPNMLGIIPYAGIDLAVY. Topologically, residues 358-380 are mitochondrial intermembrane; it reads ETLKNAWLQRYAVNSADPGVFVL. A helical transmembrane segment spans residues 381–398; the sequence is LACGTMSSTCGQLASYPL. Residues 399–437 are Mitochondrial matrix-facing; the sequence is ALVRTRMQAQASMEGAPEVTMSSLFKQILRTEGAFGLYR. Residues 438 to 457 traverse the membrane as a helical segment; sequence GLAPNFMKVIPAVSISYVVY. Residues 458-469 are Mitochondrial intermembrane-facing; the sequence is ENLKITLGVQSR.

This sequence belongs to the mitochondrial carrier (TC 2.A.29) family.

It localises to the mitochondrion inner membrane. Its function is as follows. Calcium-dependent mitochondrial solute carrier. Mitochondrial solute carriers shuttle metabolites, nucleotides, and cofactors through the mitochondrial inner membrane. May act as a ATP-Mg/Pi exchanger that mediates the transport of Mg-ATP in exchange for phosphate, catalyzing the net uptake or efflux of adenine nucleotides into or from the mitochondria. This chain is Calcium-binding mitochondrial carrier protein SCaMC-2 (SLC25A25), found in Bos taurus (Bovine).